The following is an 877-amino-acid chain: Alanine--tRNA ligase (877 aa).

4 residues coordinate Zn(2+): histidine 566, histidine 570, cysteine 668, and histidine 672.

Belongs to the class-II aminoacyl-tRNA synthetase family. Requires Zn(2+) as cofactor.

It is found in the cytoplasm. The catalysed reaction is tRNA(Ala) + L-alanine + ATP = L-alanyl-tRNA(Ala) + AMP + diphosphate. In terms of biological role, catalyzes the attachment of alanine to tRNA(Ala) in a two-step reaction: alanine is first activated by ATP to form Ala-AMP and then transferred to the acceptor end of tRNA(Ala). Also edits incorrectly charged Ser-tRNA(Ala) and Gly-tRNA(Ala) via its editing domain. In Staphylococcus aureus (strain USA300 / TCH1516), this protein is Alanine--tRNA ligase.